A 203-amino-acid chain; its full sequence is Holliday junction branch migration complex subunit RuvA (203 aa).

The interval 1–63 is domain I; that stretch reads MIGKLSGRVD…EDHINLYGFL (63 aa). The domain II stretch occupies residues 64-142; the sequence is SLEEKSFFNL…KISSSSAAIK (79 aa). The flexible linker stretch occupies residues 143 to 149; the sequence is DSLNIKG. The domain III stretch occupies residues 150 to 203; the sequence is ITPVASSEVIKALINMGFSRFEAQNAVQEIITKNPEISIDELIRTALKNRNSNF.

The protein belongs to the RuvA family. In terms of assembly, homotetramer. Forms an RuvA(8)-RuvB(12)-Holliday junction (HJ) complex. HJ DNA is sandwiched between 2 RuvA tetramers; dsDNA enters through RuvA and exits via RuvB. An RuvB hexamer assembles on each DNA strand where it exits the tetramer. Each RuvB hexamer is contacted by two RuvA subunits (via domain III) on 2 adjacent RuvB subunits; this complex drives branch migration. In the full resolvosome a probable DNA-RuvA(4)-RuvB(12)-RuvC(2) complex forms which resolves the HJ.

Its subcellular location is the cytoplasm. The RuvA-RuvB-RuvC complex processes Holliday junction (HJ) DNA during genetic recombination and DNA repair, while the RuvA-RuvB complex plays an important role in the rescue of blocked DNA replication forks via replication fork reversal (RFR). RuvA specifically binds to HJ cruciform DNA, conferring on it an open structure. The RuvB hexamer acts as an ATP-dependent pump, pulling dsDNA into and through the RuvAB complex. HJ branch migration allows RuvC to scan DNA until it finds its consensus sequence, where it cleaves and resolves the cruciform DNA. The chain is Holliday junction branch migration complex subunit RuvA from Rickettsia bellii (strain OSU 85-389).